The sequence spans 1186 residues: Myelin transcription factor 1-like protein (1186 aa).

Positions 1–21 (MEVDTEEKRHRTRSKGVRVPV) are disordered. Residues 22 to 65 (EPAIQELFSCPTPGCDGSGHVSGKYARHRSVYGCPLAKKRKTQD) form a CCHHC-type 1 zinc finger. Positions 31, 36, 49, and 55 each coordinate Zn(2+). 2 disordered regions span residues 56–175 (PLAK…QMNC) and 220–247 (RTESEMNSNTSNSLEDDSDKNENLGRKS). Positions 86–169 (SVDECDDSDG…EEEEEEEENE (84 aa)) are enriched in acidic residues. Serine 250 carries the phosphoserine modification. Disordered stretches follow at residues 342 to 372 (SETNPQERNPQQNMNIRQHVRPEEDFPGRTP) and 449 to 513 (REKM…GCDG). Over residues 343 to 357 (ETNPQERNPQQNMNI) the composition is skewed to polar residues. Composition is skewed to basic and acidic residues over residues 361–372 (VRPEEDFPGRTP), 449–487 (REKMAMEAGRRDNMRSYEDQSPRQLPGEDRKPKSSDSHV), and 495–505 (DPSRTEKKESK). 2 consecutive CCHHC-type zinc fingers follow at residues 497-540 (SRTE…PPEI) and 541-584 (LAMH…KLAK). Zn(2+) contacts are provided by cysteine 506, cysteine 511, histidine 524, cysteine 530, cysteine 550, cysteine 555, histidine 568, and cysteine 574. Disordered regions lie at residues 659–709 (RAIA…GGGS) and 753–780 (KPQDLCATRNPDMEVDENGTLDLSMNKQ). Residues 666–683 (QTRDISPKGYDDAKRYCK) are compositionally biased toward basic and acidic residues. The span at 685 to 709 (PSPSSSSTSSYAPSSSSNLSCGGGS) shows a compositional bias: low complexity. CCHHC-type zinc fingers lie at residues 896–939 (LATS…GIRI), 945–988 (DKED…QKDG), and 998–1041 (KSVK…MKKA). Residues cysteine 905, cysteine 910, histidine 923, cysteine 929, cysteine 954, cysteine 959, histidine 972, cysteine 978, cysteine 1007, cysteine 1012, histidine 1025, and cysteine 1031 each contribute to the Zn(2+) site. Residues 1056-1130 (SNGIENDEEI…LANLSQSLIH (75 aa)) are a coiled coil.

The protein belongs to the MYT1 family. As to quaternary structure, interacts with SIN3B.

The protein resides in the nucleus. Its subcellular location is the chromosome. Its function is as follows. Transcription factor that plays a key role in neuronal differentiation by specifically repressing expression of non-neuronal genes during neuron differentiation. In contrast to other transcription repressors that inhibit specific lineages, mediates repression of multiple differentiation programs. Also represses expression of negative regulators of neurogenesis, such as members of the Notch signaling pathway, including HES1. The combination of three transcription factors, ASCL1, POU3F2/BRN2 and MYT1L, is sufficient to reprogram fibroblasts and other somatic cells into induced neuronal (iN) cells in vitro. Directly binds the 5'-AAGTT-3' core motif present on the promoter of target genes and represses transcription by recruiting a multiprotein complex containing SIN3B. The 5'-AAGTT-3' core motif is absent from the promoter of neural genes. This Homo sapiens (Human) protein is Myelin transcription factor 1-like protein.